We begin with the raw amino-acid sequence, 162 residues long: Corticoliberin-1 (162 aa).

The N-terminal stretch at 1–24 (MKLNFLVTTVALLVAFPPPYECRA) is a signal peptide. Positions 25-119 (IDSSSNQPAT…ALDSEERERR (95 aa)) are excised as a propeptide. F160 bears the Phenylalanine amide mark.

Belongs to the sauvagine/corticotropin-releasing factor/urotensin I family.

It localises to the secreted. Its function is as follows. This hormone from hypothalamus regulates the release of corticotropin from pituitary gland. This chain is Corticoliberin-1 (crf1), found in Catostomus commersonii (White sucker).